We begin with the raw amino-acid sequence, 501 residues long: Histidine--tRNA ligase (501 aa).

This sequence belongs to the class-II aminoacyl-tRNA synthetase family. In terms of assembly, homodimer.

The protein localises to the cytoplasm. It catalyses the reaction tRNA(His) + L-histidine + ATP = L-histidyl-tRNA(His) + AMP + diphosphate + H(+). In Methylocella silvestris (strain DSM 15510 / CIP 108128 / LMG 27833 / NCIMB 13906 / BL2), this protein is Histidine--tRNA ligase.